We begin with the raw amino-acid sequence, 338 residues long: uncharacterized protein (338 aa).

The segment at 1–72 is disordered; that stretch reads MASPPILSRE…LNPVEDYDSK (72 aa). Polar residues predominate over residues 24-38; it reads GGNSEVNIDPSASSS. Positions 49-58 are enriched in basic and acidic residues; it reads ADTKIDPHLL. Acidic residues predominate over residues 59–68; sequence EEDDLNPVED.

The protein localises to the cytoplasm. It localises to the nucleus. This is an uncharacterized protein from Schizosaccharomyces pombe (strain 972 / ATCC 24843) (Fission yeast).